The primary structure comprises 471 residues: O-acetyltransferase astG (471 aa).

The protein belongs to the fumigaclavine B O-acetyltransferase family. As to quaternary structure, monomer.

The catalysed reaction is dideacetyl astellolide A + acetyl-CoA = 14-deacetyl astellolide A + CoA. It catalyses the reaction dideacetyl astellolide B + acetyl-CoA = 14-deacetyl astellolide B + CoA. The protein operates within secondary metabolite biosynthesis; terpenoid biosynthesis. Functionally, O-acetyltransferase; part of the gene cluster that mediates the biosynthesis of astellolides, drimane-type sesquiterpene esters that show antimicrobial, anti-inflammatory, and anti-tumor activities. The first step in astellolide biosynthesis is performed by the sesquiterpene cyclase astC that catalyzes the formation of drimanyl pyrophosphate from farnesyl pyrophosphate. Drimanyl pyrophosphate is then dephosphorylated by the sesquiterpene phosphatase astI to produce drimanyl monophosphate which is further dephosphorylated to drim-8-ene-11-ol by atsK. Drim-8-ene-11-ol is converted to confertifolin, probably by the cytochrome P450 monooxygenase astD and/or the dehydrogenase astE. The cytochrome P450 monooxygenases astB, astF and astJ then hydroxylate confertifolin at C6, C14, or C15 to form trihydroxy confertifolin. The nonribosomal peptide synthetase astA catalyzes ester bond formation between trihydroxy contifolin and benzoic acid (BA) or 4-hydroxy benzoic acid (4HBA), leading to the formation of dideacetyl astellolides A and B, respectively. Finally, the O-acetyltransferase astG converts dideacetyl astellolides A and B into deacetyl astellolides A and B. In Aspergillus oryzae (strain ATCC 42149 / RIB 40) (Yellow koji mold), this protein is O-acetyltransferase astG.